Consider the following 712-residue polypeptide: Phosphoribosylformylglycinamidine synthase subunit PurL (712 aa).

His32 is an active-site residue. Residue Tyr35 participates in ATP binding. Mg(2+) is bound at residue Glu76. Residues 77–80 and Arg99 contribute to the substrate site; that span reads SHNH. Catalysis depends on His78, which acts as the Proton acceptor. Residue Asp100 coordinates Mg(2+). Gln223 is a substrate binding site. Asp251 lines the Mg(2+) pocket. 295-297 is a binding site for substrate; that stretch reads ESQ. ATP is bound by residues Asp470 and Gly507. Mg(2+) is bound at residue Asn508. A substrate-binding site is contributed by Ser510.

The protein belongs to the FGAMS family. Monomer. Part of the FGAM synthase complex composed of 1 PurL, 1 PurQ and 2 PurS subunits.

The protein resides in the cytoplasm. The catalysed reaction is N(2)-formyl-N(1)-(5-phospho-beta-D-ribosyl)glycinamide + L-glutamine + ATP + H2O = 2-formamido-N(1)-(5-O-phospho-beta-D-ribosyl)acetamidine + L-glutamate + ADP + phosphate + H(+). The protein operates within purine metabolism; IMP biosynthesis via de novo pathway; 5-amino-1-(5-phospho-D-ribosyl)imidazole from N(2)-formyl-N(1)-(5-phospho-D-ribosyl)glycinamide: step 1/2. Part of the phosphoribosylformylglycinamidine synthase complex involved in the purines biosynthetic pathway. Catalyzes the ATP-dependent conversion of formylglycinamide ribonucleotide (FGAR) and glutamine to yield formylglycinamidine ribonucleotide (FGAM) and glutamate. The FGAM synthase complex is composed of three subunits. PurQ produces an ammonia molecule by converting glutamine to glutamate. PurL transfers the ammonia molecule to FGAR to form FGAM in an ATP-dependent manner. PurS interacts with PurQ and PurL and is thought to assist in the transfer of the ammonia molecule from PurQ to PurL. This chain is Phosphoribosylformylglycinamidine synthase subunit PurL, found in Thermococcus gammatolerans (strain DSM 15229 / JCM 11827 / EJ3).